Consider the following 205-residue polypeptide: Small ribosomal subunit protein uS4 (205 aa).

Residues 1–16 show a composition bias toward basic and acidic residues; sequence MSKRESSKYKIDRRMG. Residues 1-46 are disordered; that stretch reads MSKRESSKYKIDRRMGENIWGRPKSPVNRREYGPGQHGQRRKSKLS. One can recognise an S4 RNA-binding domain in the interval 94 to 157; that stretch reads SRLDAIVYRA…KQLVSVLESV (64 aa).

It belongs to the universal ribosomal protein uS4 family. Part of the 30S ribosomal subunit. Contacts protein S5. The interaction surface between S4 and S5 is involved in control of translational fidelity.

In terms of biological role, one of the primary rRNA binding proteins, it binds directly to 16S rRNA where it nucleates assembly of the body of the 30S subunit. Functionally, with S5 and S12 plays an important role in translational accuracy. This is Small ribosomal subunit protein uS4 from Sinorhizobium fredii (strain NBRC 101917 / NGR234).